The primary structure comprises 184 residues: MKNVTDSFVSLGHWPSAGSFGFNTDILATNPINLSVVLGVLIFFGKGVLSDLLDNRKQRILNTIQNSEELRGGAIEQLEKARSRLRKVETEAEQFRVNGYSEIEREKLNLINSTYKTLEQLENYKNETIQFEQQRAINQVRQRVFQQVLRGALGTLNSCLNNELHLRTISANIGMLGTMKEITD.

The helical transmembrane segment at 27–49 threads the bilayer; that stretch reads LATNPINLSVVLGVLIFFGKGVL.

The protein belongs to the ATPase B chain family. As to quaternary structure, F-type ATPases have 2 components, F(1) - the catalytic core - and F(0) - the membrane proton channel. F(1) has five subunits: alpha(3), beta(3), gamma(1), delta(1), epsilon(1). F(0) has four main subunits: a(1), b(1), b'(1) and c(10-14). The alpha and beta chains form an alternating ring which encloses part of the gamma chain. F(1) is attached to F(0) by a central stalk formed by the gamma and epsilon chains, while a peripheral stalk is formed by the delta, b and b' chains.

Its subcellular location is the plastid. The protein resides in the chloroplast thylakoid membrane. In terms of biological role, f(1)F(0) ATP synthase produces ATP from ADP in the presence of a proton or sodium gradient. F-type ATPases consist of two structural domains, F(1) containing the extramembraneous catalytic core and F(0) containing the membrane proton channel, linked together by a central stalk and a peripheral stalk. During catalysis, ATP synthesis in the catalytic domain of F(1) is coupled via a rotary mechanism of the central stalk subunits to proton translocation. Functionally, component of the F(0) channel, it forms part of the peripheral stalk, linking F(1) to F(0). This chain is ATP synthase subunit b, chloroplastic, found in Nicotiana tomentosiformis (Tobacco).